We begin with the raw amino-acid sequence, 232 residues long: tRNA (guanine-N(1)-)-methyltransferase (232 aa).

Gly116 contributes to the S-adenosyl-L-methionine binding site.

Belongs to the RNA methyltransferase TrmD family. As to quaternary structure, homodimer.

It is found in the cytoplasm. It catalyses the reaction guanosine(37) in tRNA + S-adenosyl-L-methionine = N(1)-methylguanosine(37) in tRNA + S-adenosyl-L-homocysteine + H(+). Functionally, specifically methylates guanosine-37 in various tRNAs. The chain is tRNA (guanine-N(1)-)-methyltransferase from Chlorobium luteolum (strain DSM 273 / BCRC 81028 / 2530) (Pelodictyon luteolum).